A 453-amino-acid chain; its full sequence is Validoxylamine A glucosyltransferase (453 aa).

This sequence belongs to the glycosyltransferase 2 family. Mn(2+) is required as a cofactor.

It carries out the reaction validoxylamine A + UDP-alpha-D-glucose = validamycin A + UDP + H(+). Its function is as follows. Involved in the biosynthesis of the antifungal agent validamycin A. Catalyzes the final attachment of glucose from UDP-alpha-D-glucose to validoxylamine A to yield validamycin A. The polypeptide is Validoxylamine A glucosyltransferase (Streptomyces hygroscopicus subsp. limoneus).